The chain runs to 612 residues: Alpha-glycerophosphate oxidase (612 aa).

Position 21 to 49 (21 to 49 (DLLIIGGGITGAGVALQAAASGLDTGLIE)) interacts with FAD. The span at 398 to 408 (VETSTSEKELD) shows a compositional bias: basic and acidic residues. The tract at residues 398–418 (VETSTSEKELDPSAVSRGSSF) is disordered.

It belongs to the FAD-dependent glycerol-3-phosphate dehydrogenase family. FAD is required as a cofactor.

The protein resides in the cytoplasm. It carries out the reaction sn-glycerol 3-phosphate + O2 = dihydroxyacetone phosphate + H2O2. In Streptococcus pyogenes serotype M18 (strain MGAS8232), this protein is Alpha-glycerophosphate oxidase (glpO).